A 344-amino-acid chain; its full sequence is Probable dual-specificity RNA methyltransferase RlmN (344 aa).

The Proton acceptor role is filled by Glu89. Positions 95–329 constitute a Radical SAM core domain; that stretch reads TDQRLTVCVS…VSLRASRGLD (235 aa). Residues Cys102 and Cys334 are joined by a disulfide bond. 3 residues coordinate [4Fe-4S] cluster: Cys109, Cys113, and Cys116. S-adenosyl-L-methionine contacts are provided by residues 156 to 157, Ser186, 215 to 217, and Asn291; these read GE and SLH. The active-site S-methylcysteine intermediate is the Cys334.

The protein belongs to the radical SAM superfamily. RlmN family. The cofactor is [4Fe-4S] cluster.

It localises to the cytoplasm. The enzyme catalyses adenosine(2503) in 23S rRNA + 2 reduced [2Fe-2S]-[ferredoxin] + 2 S-adenosyl-L-methionine = 2-methyladenosine(2503) in 23S rRNA + 5'-deoxyadenosine + L-methionine + 2 oxidized [2Fe-2S]-[ferredoxin] + S-adenosyl-L-homocysteine. It carries out the reaction adenosine(37) in tRNA + 2 reduced [2Fe-2S]-[ferredoxin] + 2 S-adenosyl-L-methionine = 2-methyladenosine(37) in tRNA + 5'-deoxyadenosine + L-methionine + 2 oxidized [2Fe-2S]-[ferredoxin] + S-adenosyl-L-homocysteine. Functionally, specifically methylates position 2 of adenine 2503 in 23S rRNA and position 2 of adenine 37 in tRNAs. The protein is Probable dual-specificity RNA methyltransferase RlmN of Parasynechococcus marenigrum (strain WH8102).